A 1490-amino-acid polypeptide reads, in one-letter code: DNA-directed RNA polymerase subunit beta' (1490 aa).

Zn(2+) contacts are provided by Cys-67, Cys-69, Cys-82, and Cys-85. Mg(2+) is bound by residues Asp-499, Asp-501, and Asp-503. Residues Cys-868, Cys-944, Cys-951, and Cys-954 each contribute to the Zn(2+) site.

This sequence belongs to the RNA polymerase beta' chain family. As to quaternary structure, the RNAP catalytic core consists of 2 alpha, 1 beta, 1 beta' and 1 omega subunit. When a sigma factor is associated with the core the holoenzyme is formed, which can initiate transcription. Requires Mg(2+) as cofactor. The cofactor is Zn(2+).

The enzyme catalyses RNA(n) + a ribonucleoside 5'-triphosphate = RNA(n+1) + diphosphate. Functionally, DNA-dependent RNA polymerase catalyzes the transcription of DNA into RNA using the four ribonucleoside triphosphates as substrates. The polypeptide is DNA-directed RNA polymerase subunit beta' (Chlorobaculum tepidum (strain ATCC 49652 / DSM 12025 / NBRC 103806 / TLS) (Chlorobium tepidum)).